A 243-amino-acid chain; its full sequence is Killer cell lectin-like receptor subfamily I member 1 (243 aa).

At 1 to 80 (MPHSKHRDYT…RQGPKSAVWR (80 aa)) the chain is on the cytoplasmic side. 2 short sequence motifs (ITIM motif) span residues 16-21 (IPYTEL) and 47-52 (LKYAEL). A helical; Signal-anchor for type II membrane protein membrane pass occupies residues 81–101 (VVTCVLGVLCVVLMITMGILV). The Extracellular segment spans residues 102-243 (PKLFSGQEEQ…KPYACEFNKM (142 aa)). 5 N-linked (GlcNAc...) asparagine glycosylation sites follow: Asn123, Asn191, Asn194, Asn200, and Asn214. Residues 137–239 (FGNNFYLFFR…CSSKKPYACE (103 aa)) form the C-type lectin domain. Intrachain disulfides connect Cys158–Cys238 and Cys217–Cys230.

In terms of assembly, heterodimer with KLRE1. Interacts with PTPN6. Expressed in natural killer (NK) cells.

It is found in the cell membrane. Functionally, lectin-like receptor for natural killer (NK) cells. Heterodimer formation with KLRE1 mediates inhibition of NK cell cytolytic activity. This is Killer cell lectin-like receptor subfamily I member 1 from Rattus norvegicus (Rat).